The chain runs to 286 residues: 4-hydroxy-tetrahydrodipicolinate synthase (286 aa).

Threonine 42 contributes to the pyruvate binding site. The Proton donor/acceptor role is filled by tyrosine 129. The active-site Schiff-base intermediate with substrate is lysine 157. Valine 196 contacts pyruvate.

The protein belongs to the DapA family. Homotetramer; dimer of dimers.

Its subcellular location is the cytoplasm. It carries out the reaction L-aspartate 4-semialdehyde + pyruvate = (2S,4S)-4-hydroxy-2,3,4,5-tetrahydrodipicolinate + H2O + H(+). It participates in amino-acid biosynthesis; L-lysine biosynthesis via DAP pathway; (S)-tetrahydrodipicolinate from L-aspartate: step 3/4. In terms of biological role, catalyzes the condensation of (S)-aspartate-beta-semialdehyde [(S)-ASA] and pyruvate to 4-hydroxy-tetrahydrodipicolinate (HTPA). The polypeptide is 4-hydroxy-tetrahydrodipicolinate synthase (Chlamydia muridarum (strain MoPn / Nigg)).